The sequence spans 296 residues: D-alanine--D-alanine ligase (296 aa).

The ATP-grasp domain occupies 103 to 293 (KEILMHHRMP…FDSFVKRIIE (191 aa)). 129 to 180 (ISFPVAVKPSSGGSSIATFKVKSIQELKHAYEEASKYGEVMIEQWVTGKEIT) contacts ATP. Mg(2+) is bound by residues Asp-247, Glu-260, and Asn-262.

The protein belongs to the D-alanine--D-alanine ligase family. Mg(2+) is required as a cofactor. It depends on Mn(2+) as a cofactor.

The protein resides in the cytoplasm. The catalysed reaction is 2 D-alanine + ATP = D-alanyl-D-alanine + ADP + phosphate + H(+). Its pathway is cell wall biogenesis; peptidoglycan biosynthesis. In terms of biological role, cell wall formation. The polypeptide is D-alanine--D-alanine ligase (Francisella tularensis subsp. tularensis (strain FSC 198)).